Reading from the N-terminus, the 656-residue chain is Hemocyanin subunit A (656 aa).

An N-terminal signal peptide occupies residues Met-1–Ala-18. The Cu cation site is built by His-197, His-201, and His-227. N-linked (GlcNAc...) asparagine glycosylation occurs at Asn-313. Residues His-348, His-352, and His-388 each coordinate Cu cation. A disulfide bridge connects residues Cys-558 and Cys-606.

This sequence belongs to the tyrosinase family. Hemocyanin subfamily. In terms of assembly, 36-chain polymer consisting of 6 hexamers, each of which includes 4 different chains, A, B, C and D. In terms of tissue distribution, hemolymph.

The protein localises to the secreted. Its subcellular location is the extracellular space. Its function is as follows. Hemocyanins are copper-containing oxygen carriers occurring freely dissolved in the hemolymph of many mollusks and arthropods. The protein is Hemocyanin subunit A (HCA) of Scutigera coleoptrata (House centipede).